Consider the following 508-residue polypeptide: Photosystem II CP47 reaction center protein (508 aa).

Transmembrane regions (helical) follow at residues 21 to 36 (SVHI…WAGS), 101 to 115 (IILA…MWHW), 140 to 156 (GIHL…FGAF), 203 to 218 (IAAG…FHLS), 237 to 252 (VLSS…AFVV), and 457 to 472 (CFAL…HGAR).

Belongs to the PsbB/PsbC family. PsbB subfamily. PSII is composed of 1 copy each of membrane proteins PsbA, PsbB, PsbC, PsbD, PsbE, PsbF, PsbH, PsbI, PsbJ, PsbK, PsbL, PsbM, PsbT, PsbX, PsbY, PsbZ, Psb30/Ycf12, at least 3 peripheral proteins of the oxygen-evolving complex and a large number of cofactors. It forms dimeric complexes. Requires Binds multiple chlorophylls. PSII binds additional chlorophylls, carotenoids and specific lipids. as cofactor.

It is found in the plastid. The protein localises to the chloroplast thylakoid membrane. Functionally, one of the components of the core complex of photosystem II (PSII). It binds chlorophyll and helps catalyze the primary light-induced photochemical processes of PSII. PSII is a light-driven water:plastoquinone oxidoreductase, using light energy to abstract electrons from H(2)O, generating O(2) and a proton gradient subsequently used for ATP formation. The sequence is that of Photosystem II CP47 reaction center protein from Mesostigma viride (Green alga).